A 458-amino-acid polypeptide reads, in one-letter code: MALWGGRFTQAADQRFKQFNDSLRFDYRLAEQDIVGSVAWSKALVTVGVLTADEQRQLEEALNVLLEEVRANPQQILQSDAEDIHSWVEGKLIDKVGQLGKKLHTGRSRNDQVATDLKLWCKETVRELLTANRQLQSALVETAQANQDAVMPGYTHLQRAQPVTFAHWCLAYVEMLARDESRLQDTLKRLDVSPLGCGALAGTAYEIDREQLAGWLGFASATRNSLDSVSDRDHVLELLSDAAIGMVHLSRFAEDLIFFNSGEAGFVELSDRVTSGSSLMPQKKNPDALELIRGKCGRVQGALTGMMMTLKGLPLAYNKDMQEDKEGLFDALDTWLDCLHMAALVLDGIQVKRPRCQDAAQQGYANATELADYLVAKGVPFREAHHIVGEAVVEAIRQGKPLEALPLADLQKFSHVIGDDVYPMLSLQSCLDKRAAKGGVSPQQVAQAINDAKARLAL.

Belongs to the lyase 1 family. Argininosuccinate lyase subfamily.

Its subcellular location is the cytoplasm. It catalyses the reaction 2-(N(omega)-L-arginino)succinate = fumarate + L-arginine. It functions in the pathway amino-acid biosynthesis; L-arginine biosynthesis; L-arginine from L-ornithine and carbamoyl phosphate: step 3/3. In Salmonella heidelberg (strain SL476), this protein is Argininosuccinate lyase.